We begin with the raw amino-acid sequence, 410 residues long: MKFASTFAGFFATRRENGGTQTSRAVDRLMRPADSLRELDPLLIWSATGLLLIGLVMVYSSSIATAEGSRFTGHQSHYFLLRHAMFLAVGIGAGLAAFQLSMRQWQRFAPWLFLIGVMLLVVVLIPGVGREVNGAQRWLPLGPLNLQPSELMKLFVALYAADYTVRKLPDMGSFRRGFLPMAAMILLVGFLLLGEPDFGAFVVITAIAFGVLFLGGINVRVFALLALVAVIGFMLLIWLSPYRRDRIFGFMDPWQDAFGKGYQLSHALIAFGRGEWFGVGLGASVEKLFYLPEAHTDFLLAVIAEELGFAGVLTVIALFAILIHRALVLGREAVKLERYFSGLVAMGIGLWLGVQSFINMGVNMGLLPTKGLTLPLMSFGGSGIVANCLALAILLRVDWEVRQLKRGCGA.

9 helical membrane-spanning segments follow: residues 39–59 (LDPL…VMVY), 78–98 (YFLL…LAAF), 108–128 (FAPW…IPGV), 177–197 (GFLP…GEPD), 198–218 (FGAF…GGIN), 221–241 (VFAL…WLSP), 303–323 (IAEE…AILI), 342–362 (GLVA…NMGV), and 374–394 (LPLM…LAIL).

It belongs to the SEDS family. FtsW subfamily.

It localises to the cell inner membrane. The catalysed reaction is [GlcNAc-(1-&gt;4)-Mur2Ac(oyl-L-Ala-gamma-D-Glu-L-Lys-D-Ala-D-Ala)](n)-di-trans,octa-cis-undecaprenyl diphosphate + beta-D-GlcNAc-(1-&gt;4)-Mur2Ac(oyl-L-Ala-gamma-D-Glu-L-Lys-D-Ala-D-Ala)-di-trans,octa-cis-undecaprenyl diphosphate = [GlcNAc-(1-&gt;4)-Mur2Ac(oyl-L-Ala-gamma-D-Glu-L-Lys-D-Ala-D-Ala)](n+1)-di-trans,octa-cis-undecaprenyl diphosphate + di-trans,octa-cis-undecaprenyl diphosphate + H(+). It functions in the pathway cell wall biogenesis; peptidoglycan biosynthesis. Its function is as follows. Peptidoglycan polymerase that is essential for cell division. The polypeptide is Probable peptidoglycan glycosyltransferase FtsW (Aromatoleum aromaticum (strain DSM 19018 / LMG 30748 / EbN1) (Azoarcus sp. (strain EbN1))).